The following is a 159-amino-acid chain: NPLLATSIINTGSSISARSQDGLGNYAFNYGIGNGLGATNSRAEFGDAAGNKKGSYTITDIDGRARRVDYVADAAGFRASIKTNEPGTALSAPAAAAIVSPYAPPVAPVAPAVAAPVVAAAPALAGAHLLAAPGISSYSSVIGHGAGLYAPGIAKTIFW.

Positions 23 to 89 (LGNYAFNYGI…SIKTNEPGTA (67 aa)) constitute a Chitin-binding type R&amp;R domain.

Its function is as follows. Component of the rigid cuticle of the spider. This is Adult-specific rigid cuticular protein 15.7 from Araneus diadematus (European garden spider).